The sequence spans 837 residues: V-type proton ATPase 116 kDa subunit a 1 (837 aa).

The Cytoplasmic segment spans residues 1–388 (MGELFRSEEM…DAYGIGSYRE (388 aa)). A helical transmembrane segment spans residues 389 to 407 (INPAPYTIITFPFLFAVMF). At 408–409 (GD) the chain is on the vacuolar side. A helical transmembrane segment spans residues 410 to 426 (FGHGILMTLFAVWMVVR). At 427–441 (ESRILSQKIDNELFT) the chain is on the cytoplasmic side. A helical transmembrane segment spans residues 442–471 (MMFSGRYIILLMGLFSIYTGLIYNDCFSKA). Over 472-534 (LNLFGSSWSV…ATNKLTFLNS (63 aa)) the chain is Vacuolar. The helical transmembrane segment at 535–554 (FKMKMSVVLGIIHMTFGVAL) threads the bilayer. Over 555 to 572 (SLLNHIYFKKPLNIYLGF) the chain is Cytoplasmic. A helical transmembrane segment spans residues 573–593 (IPEMIFMTTLFGYLVILIIYK). Topologically, residues 594–638 (WCAYDASTSMVAPSLLIHFINMFLFSYQDTSLPMLYKGQMGLQCF) are vacuolar. A helical transmembrane segment spans residues 639-658 (LVVCAIICVPWMLVVKPLIL). Topologically, residues 659–724 (RRQYLRRKHL…DTVVHQAIHT (66 aa)) are cytoplasmic. Residues 725–749 (IEYCLGCISNTASYLRLWALSLAHA) traverse the membrane as a helical segment. The Vacuolar portion of the chain corresponds to 750–770 (QLSEVLWTMVMHVGLSIRSLG). A helical transmembrane segment spans residues 771–809 (GGIALVFVFSAFATLTIAILLIMEGLSAFLHALRLHWVE). Topologically, residues 810-837 (FQNKFYMGTGFKFLPFSFENIREGKFDE) are cytoplasmic.

Belongs to the V-ATPase 116 kDa subunit family. V-ATPase is a heteromultimeric enzyme made up of two complexes: the ATP-hydrolytic V1 complex and the proton translocation V0 complex. The V1 complex consists of three catalytic AB heterodimers that form a heterohexamer, three peripheral stalks each consisting of EG heterodimers, one central rotor including subunits D and F, and the regulatory subunits C and H. The proton translocation complex V0 consists of the proton transport subunit a, a ring of proteolipid subunits c9c'', rotary subunit d, subunits e and f, and two accessory subunits.

Its subcellular location is the cytoplasmic vesicle. It is found in the clathrin-coated vesicle membrane. The protein localises to the secretory vesicle. It localises to the synaptic vesicle membrane. The protein resides in the melanosome. Subunit of the V0 complex of vacuolar(H+)-ATPase (V-ATPase), a multisubunit enzyme composed of a peripheral complex (V1) that hydrolyzes ATP and a membrane integral complex (V0) that translocates protons. V-ATPase is responsible for acidifying and maintaining the pH of intracellular compartments and in some cell types, is targeted to the plasma membrane, where it is responsible for acidifying the extracellular environment. Required for assembly and activity of the vacuolar ATPase. The polypeptide is V-type proton ATPase 116 kDa subunit a 1 (atp6v0a1) (Xenopus tropicalis (Western clawed frog)).